Reading from the N-terminus, the 202-residue chain is Small ribosomal subunit protein uS4 (202 aa).

The interval 18 to 44 (LPGLTRKSARREYPPGQHGQGRRKRSE) is disordered. Residues 90–152 (MRLDNTVFRL…DRSRKLIEAN (63 aa)) form the S4 RNA-binding domain.

It belongs to the universal ribosomal protein uS4 family. As to quaternary structure, part of the 30S ribosomal subunit. Contacts protein S5. The interaction surface between S4 and S5 is involved in control of translational fidelity.

One of the primary rRNA binding proteins, it binds directly to 16S rRNA where it nucleates assembly of the body of the 30S subunit. Functionally, with S5 and S12 plays an important role in translational accuracy. This chain is Small ribosomal subunit protein uS4, found in Picosynechococcus sp. (strain ATCC 27264 / PCC 7002 / PR-6) (Agmenellum quadruplicatum).